Reading from the N-terminus, the 424-residue chain is UPF0597 protein Sputcn32_1209 (424 aa).

It belongs to the UPF0597 family.

This is UPF0597 protein Sputcn32_1209 from Shewanella putrefaciens (strain CN-32 / ATCC BAA-453).